Here is a 110-residue protein sequence, read N- to C-terminus: UPF0213 protein DP2720 (110 aa).

The 77-residue stretch at proline 12–threonine 88 folds into the GIY-YIG domain.

This sequence belongs to the UPF0213 family.

In Desulfotalea psychrophila (strain LSv54 / DSM 12343), this protein is UPF0213 protein DP2720.